A 121-amino-acid chain; its full sequence is Protein SNORC (121 aa).

Positions 1-24 are cleaved as a signal peptide; the sequence is MASCLALRMALLLVSGVLAPAVLT. Topologically, residues 25-92 are extracellular; it reads DDVPQEPVPT…QGGGSLGPGA (68 aa). The tract at residues 28 to 84 is disordered; sequence PQEPVPTLWNEPAELPSGEGPVESTSPGREPVDTGPPAPTVAPGPEDSTAQERLDQG. A helical membrane pass occupies residues 93–113; sequence IAAIVIAALLATCVVLALVVV. Residues 114 to 121 lie on the Cytoplasmic side of the membrane; that stretch reads ALRKFSAS.

As to quaternary structure, interacts (via the extracellular domain) with FGF2. As to expression, expressed in cartilage.

It is found in the membrane. Its subcellular location is the cytoplasm. The protein resides in the secreted. It localises to the extracellular space. The protein localises to the extracellular matrix. Plays a role in the regulation of chondrocyte maturation and postnatal endochondral ossification. May inhibit cell growth stimulation induced by FGF2. This chain is Protein SNORC, found in Homo sapiens (Human).